The chain runs to 597 residues: Protein IQ-DOMAIN 29 (597 aa).

The tract at residues 1–31 (MGKTPSPGKWIKSLLGKKSSKSSLEKGGEKL) is disordered. 3 IQ domains span residues 106–134 (LEEA…GITR), 135–153 (VQAV…ATYS), and 157–183 (GIVK…QKTN). The tract at residues 159 to 173 (VKVQALVRGKKARSS) is calmodulin-binding. The Nuclear localization signal 1 motif lies at 264 to 271 (KKRSFQAV). Disordered stretches follow at residues 268–379 (FQAV…KKEI) and 407–597 (LIPV…EWKR). Residues 289 to 300 (STTANSSTSRST) are compositionally biased toward low complexity. Positions 319–329 (ELSKIENDKSK) are enriched in basic and acidic residues. A Nuclear localization signal 2 motif is present at residues 356-363 (HKKASLSN). Residues 414 to 463 (KESDLDKDEKSLVLDKPEQDELRTAERDDKAEEELKTAERDDSAEEKIQE) show a composition bias toward basic and acidic residues. The segment covering 467–480 (QISSENGNVASENT) has biased composition (polar residues). The span at 481–500 (KPSDRRASLPAKIENHHQDD) shows a compositional bias: basic and acidic residues. Over residues 572 to 584 (GSMNSDRSFSSSK) the composition is skewed to polar residues. Residues 585-597 (DIGDKSTKAEWKR) are compositionally biased toward basic and acidic residues.

This sequence belongs to the IQD family. In terms of assembly, binds to multiple calmodulin (CaM) in the presence of Ca(2+) and CaM-like proteins.

The protein resides in the nucleus. It is found in the nucleus envelope. Its subcellular location is the cytoplasm. The protein localises to the cytoskeleton. It localises to the cell membrane. In terms of biological role, may be involved in cooperative interactions with calmodulins or calmodulin-like proteins. Recruits calmodulin proteins to microtubules, thus being a potential scaffold in cellular signaling and trafficking. May associate with nucleic acids and regulate gene expression at the transcriptional or post-transcriptional level. The sequence is that of Protein IQ-DOMAIN 29 from Arabidopsis thaliana (Mouse-ear cress).